The sequence spans 207 residues: Urease accessory protein UreG (207 aa).

A GTP-binding site is contributed by 14–21 (GPVGSGKT).

It belongs to the SIMIBI class G3E GTPase family. UreG subfamily. Homodimer. UreD, UreF and UreG form a complex that acts as a GTP-hydrolysis-dependent molecular chaperone, activating the urease apoprotein by helping to assemble the nickel containing metallocenter of UreC. The UreE protein probably delivers the nickel.

The protein localises to the cytoplasm. Functionally, facilitates the functional incorporation of the urease nickel metallocenter. This process requires GTP hydrolysis, probably effectuated by UreG. The protein is Urease accessory protein UreG of Pseudomonas entomophila (strain L48).